The sequence spans 421 residues: D-inositol 3-phosphate glycosyltransferase (421 aa).

His-9 serves as a coordination point for 1D-myo-inositol 3-phosphate. UDP-N-acetyl-alpha-D-glucosamine-binding positions include Gln-15–Pro-16 and Gly-23. Residues Asp-20–Asn-25, Lys-78, Tyr-110, Thr-134, and Arg-154 each bind 1D-myo-inositol 3-phosphate. UDP-N-acetyl-alpha-D-glucosamine is bound by residues Arg-231, Lys-236, and Arg-294. Mg(2+) is bound by residues Tyr-303, Gln-304, and Ala-306. Glu-316 and Glu-324 together coordinate UDP-N-acetyl-alpha-D-glucosamine. Thr-330 is a Mg(2+) binding site.

It belongs to the glycosyltransferase group 1 family. MshA subfamily. As to quaternary structure, homodimer.

It catalyses the reaction 1D-myo-inositol 3-phosphate + UDP-N-acetyl-alpha-D-glucosamine = 1D-myo-inositol 2-acetamido-2-deoxy-alpha-D-glucopyranoside 3-phosphate + UDP + H(+). Its function is as follows. Catalyzes the transfer of a N-acetyl-glucosamine moiety to 1D-myo-inositol 3-phosphate to produce 1D-myo-inositol 2-acetamido-2-deoxy-glucopyranoside 3-phosphate in the mycothiol biosynthesis pathway. The polypeptide is D-inositol 3-phosphate glycosyltransferase (Corynebacterium aurimucosum (strain ATCC 700975 / DSM 44827 / CIP 107346 / CN-1) (Corynebacterium nigricans)).